We begin with the raw amino-acid sequence, 309 residues long: Protein FdhE (309 aa).

It belongs to the FdhE family.

It localises to the cytoplasm. Functionally, necessary for formate dehydrogenase activity. In Escherichia coli (strain K12 / MC4100 / BW2952), this protein is Protein FdhE.